We begin with the raw amino-acid sequence, 318 residues long: MKQNTYSPLVSIIIPVYNGANYMREAIDSALAQTYKNIEIIVVNDGSKDKTETIALSYGDKICYFYKENGGCGSALNYGIKNMKGEYFSWLSHDDLYYPNKIEHQINILNKLDNKDVIVYCGYELIDQKSHSLYFVKPDQRYSKEKLDISLFPLLHSLIHGCTLLIPSILFKKIGLFDESLKYTHDYDLWFKFLRVSSVYFDHEVLIKSRVHDAQTTNTALNQLEEYEALWSGFLKKLTKQEMIMIKGSTHQFLSDIAVFFKKNGYIKSYQLALAMTDKKIIGGFCTFIIKEIIYSLRKYGINTTITKIYTWIRKNRK.

This sequence belongs to the glycosyltransferase 2 family.

This is an uncharacterized protein from Rickettsia typhi (strain ATCC VR-144 / Wilmington).